We begin with the raw amino-acid sequence, 329 residues long: Putative ubiquitin thioesterase otu1 (329 aa).

Positions 7-89 are UBX-like; sequence RLKYENQSAV…ATSFSTNEPA (83 aa). The segment at 85-127 is disordered; that stretch reads TNEPAKPPIPNAATKPTFPPQTEISNPPAVSHQSKNTSQDPPY. Residues 115-124 show a composition bias toward polar residues; the sequence is SHQSKNTSQD. In terms of domain architecture, OTU spans 135-254; that stretch reads IALRVMPDDN…GIHYDLAALA (120 aa). The cys-loop stretch occupies residues 140 to 146; it reads MPDDNSC. Asp-143 is an active-site residue. Cys-146 functions as the Nucleophile in the catalytic mechanism. The variable-loop stretch occupies residues 193–203; that stretch reads IRKETSWGGYI. The segment at 243-247 is his-loop; that stretch reads YSGIH. Residue Ile-246 coordinates substrate. His-247 is a catalytic residue. The interval 272–277 is S2 site; sequence VTITPY. Residues 299 to 323 form a C2H2-type zinc finger; sequence IRCTICGTGLVGEKDATAHALATGH. The active site involves His-323.

It is found in the cytoplasm. Its subcellular location is the nucleus. It catalyses the reaction Thiol-dependent hydrolysis of ester, thioester, amide, peptide and isopeptide bonds formed by the C-terminal Gly of ubiquitin (a 76-residue protein attached to proteins as an intracellular targeting signal).. Hydrolase that can remove conjugated ubiquitin from proteins and may therefore play an important regulatory role at the level of protein turnover by preventing degradation. Has a role in meiosis. This is Putative ubiquitin thioesterase otu1 (otu1) from Schizosaccharomyces pombe (strain 972 / ATCC 24843) (Fission yeast).